Here is a 373-residue protein sequence, read N- to C-terminus: tRNA-specific 2-thiouridylase MnmA (373 aa).

Residues 12–19 and Met-38 each bind ATP; that span reads GMSGGVDS. An interaction with target base in tRNA region spans residues 98–100; that stretch reads NPD. Catalysis depends on Cys-103, which acts as the Nucleophile. The cysteines at positions 103 and 200 are disulfide-linked. Residue Gly-127 coordinates ATP. An interaction with tRNA region spans residues 150–152; sequence KDQ. The active-site Cysteine persulfide intermediate is Cys-200. An interaction with tRNA region spans residues 312 to 313; the sequence is RY.

This sequence belongs to the MnmA/TRMU family.

The protein localises to the cytoplasm. The catalysed reaction is S-sulfanyl-L-cysteinyl-[protein] + uridine(34) in tRNA + AH2 + ATP = 2-thiouridine(34) in tRNA + L-cysteinyl-[protein] + A + AMP + diphosphate + H(+). In terms of biological role, catalyzes the 2-thiolation of uridine at the wobble position (U34) of tRNA, leading to the formation of s(2)U34. In Streptococcus uberis (strain ATCC BAA-854 / 0140J), this protein is tRNA-specific 2-thiouridylase MnmA.